We begin with the raw amino-acid sequence, 233 residues long: Ribosomal RNA small subunit methyltransferase G (233 aa).

S-adenosyl-L-methionine contacts are provided by residues Gly96, Leu101, 146–147, and Arg160; that span reads LE.

Belongs to the methyltransferase superfamily. RNA methyltransferase RsmG family.

It is found in the cytoplasm. It catalyses the reaction guanosine(527) in 16S rRNA + S-adenosyl-L-methionine = N(7)-methylguanosine(527) in 16S rRNA + S-adenosyl-L-homocysteine. In terms of biological role, specifically methylates the N7 position of guanine in position 527 of 16S rRNA. This Sphingopyxis alaskensis (strain DSM 13593 / LMG 18877 / RB2256) (Sphingomonas alaskensis) protein is Ribosomal RNA small subunit methyltransferase G.